Reading from the N-terminus, the 643-residue chain is Transmembrane 9 superfamily member 4 (643 aa).

The N-terminal stretch at Met1–Thr23 is a signal peptide. Residues Phe24–Phe282 are Extracellular-facing. The helical transmembrane segment at Ser283–Ile303 threads the bilayer. Residues Arg304–Ser347 are Cytoplasmic-facing. Tyr313 bears the Phosphotyrosine mark. The helical transmembrane segment at Leu348–Leu368 threads the bilayer. At Gly369–Gly377 the chain is on the extracellular side. A helical membrane pass occupies residues Ala378–Ala398. The Cytoplasmic segment spans residues Gly399–Thr417. The helical transmembrane segment at Ala418–Gly438 threads the bilayer. The Extracellular portion of the chain corresponds to Lys439 to Met450. Residues Val451–Phe471 form a helical membrane-spanning segment. The Cytoplasmic portion of the chain corresponds to Gly472–Val502. Residues Gly503 to Phe523 form a helical membrane-spanning segment. Residues Ser524–Gly536 lie on the Extracellular side of the membrane. A helical membrane pass occupies residues Phe537–Val557. Residues Tyr558–Arg571 lie on the Cytoplasmic side of the membrane. A helical membrane pass occupies residues Asn572–Val592. Residues Asn593 to Glu599 are Extracellular-facing. A helical membrane pass occupies residues Phe600–Leu620. Over Thr621–Asp643 the chain is Cytoplasmic.

This sequence belongs to the nonaspanin (TM9SF) (TC 9.A.2) family.

Its subcellular location is the membrane. It localises to the golgi apparatus. It is found in the early endosome. Associates with proteins harboring glycine-rich transmembrane domains and ensures their efficient localization to the cell surface. This Mus musculus (Mouse) protein is Transmembrane 9 superfamily member 4 (Tm9sf4).